The primary structure comprises 59 residues: Ribosome biogenesis protein Nop10 (59 aa).

The protein belongs to the NOP10 family.

Functionally, involved in ribosome biogenesis; more specifically in 18S rRNA pseudouridylation and in cleavage of pre-rRNA. This chain is Ribosome biogenesis protein Nop10, found in Thermococcus kodakarensis (strain ATCC BAA-918 / JCM 12380 / KOD1) (Pyrococcus kodakaraensis (strain KOD1)).